The sequence spans 125 residues: Large ribosomal subunit protein bL12 (125 aa).

It belongs to the bacterial ribosomal protein bL12 family. Homodimer. Part of the ribosomal stalk of the 50S ribosomal subunit. Forms a multimeric L10(L12)X complex, where L10 forms an elongated spine to which 2 to 4 L12 dimers bind in a sequential fashion. Binds GTP-bound translation factors.

In terms of biological role, forms part of the ribosomal stalk which helps the ribosome interact with GTP-bound translation factors. Is thus essential for accurate translation. This is Large ribosomal subunit protein bL12 from Variovorax paradoxus (strain S110).